The following is a 143-amino-acid chain: Transcription antitermination protein NusB (143 aa).

The protein belongs to the NusB family.

Its function is as follows. Involved in transcription antitermination. Required for transcription of ribosomal RNA (rRNA) genes. Binds specifically to the boxA antiterminator sequence of the ribosomal RNA (rrn) operons. This is Transcription antitermination protein NusB from Desulfatibacillum aliphaticivorans.